The chain runs to 877 residues: SRP-independent targeting protein 1 (877 aa).

Residues Ser309, Ser310, Ser311, Ser332, and Ser334 each carry the phosphoserine modification. Disordered regions lie at residues 369–414 (LRKQ…PSND), 446–521 (DDYT…DVLS), and 550–579 (KPFN…SNHF). Residues 389–402 (RSQSYSSSNMSRSP) are compositionally biased toward low complexity. Residues 412-441 (SNDELVYDELNNQINEVQDRAKNEEIVLYN) are a coiled coil. Residues 447–462 (DYTKERGEQEQDRTSY) show a composition bias toward basic and acidic residues. Residues 470–501 (YDDEEGGNEDNYDDDEDDDDDDDDDDESDDEG) are compositionally biased toward acidic residues. 2 stretches are compositionally biased toward polar residues: residues 510-521 (LSRSGSSTDVLS) and 551-579 (PFNQ…SNHF). Residues Lys668 and Lys670 each participate in a glycyl lysine isopeptide (Lys-Gly) (interchain with G-Cter in ubiquitin) cross-link. 3 positions are modified to phosphoserine: Ser692, Ser694, and Ser706. Residues 773-815 (SLPKEREDDNDSTNSTIVPNHPDNDNYNDNDNDNNTGINSNNF) form a disordered region. Low complexity predominate over residues 805–815 (DNNTGINSNNF). A Phosphoserine modification is found at Ser841.

In terms of assembly, interacts with ENV10/SND2.

It is found in the cytoplasm. Functions in the SND pathway, a SRP (signal recognition particle) and GET (guided entry of tail-anchored proteins) independent pathway for targeting a broad range of substrate proteins to the endoplasmic reticulum. SND functions in parallel to GET in targeting proteins with downstream hydrophobic motifs. This is SRP-independent targeting protein 1 from Saccharomyces cerevisiae (strain ATCC 204508 / S288c) (Baker's yeast).